The primary structure comprises 279 residues: Lipid phosphate phosphatase epsilon 1, chloroplastic (279 aa).

The transit peptide at 1-88 (MAASSSLLLL…SFINNSSEIR (88 aa)) directs the protein to the chloroplast. 5 helical membrane-spanning segments follow: residues 126 to 142 (LWAV…SVVL), 164 to 184 (SHAQ…MEWL), 185 to 205 (GTNG…SYFI), 219 to 239 (VVVG…MWNS), and 255 to 275 (VFLF…LNWF).

Belongs to the PA-phosphatase related phosphoesterase family. Expressed in root tips, root branch points, cotyledons and leaves.

It localises to the plastid. The protein resides in the chloroplast inner membrane. Inhibited by Mg(2+). Functionally, exhibits phosphatidate phosphatase (PAP) activity in vitro. May play a secondary role as PAP in plastids. The polypeptide is Lipid phosphate phosphatase epsilon 1, chloroplastic (LPPE1) (Arabidopsis thaliana (Mouse-ear cress)).